Consider the following 279-residue polypeptide: MAFQGTSRTLTQQSSADTSDDLQKILFSPEAIKKMATECDLGRHHWMRADNAISVRPLVPEVTHGRIASFFKSGYDVGELCSKGYMSVPQVLCAVTRTVSTDAEGSLRIYLADLGDKELSPIDGQCVSLHNHDLPALVSFQPTYDCPMETVGNRKRCFAVVIERHGYIGYTGTTASVCSNWQARFSSKNNNYTHIAAGKTLVLPFNRLAEQTKPSAVARLLKSQLNNIESSQYLLTNVKINQNARSESEELNVESPPAAIGSSSASRSEAFRPQVVNGL.

The segment at 247–279 is disordered; it reads ESEELNVESPPAAIGSSSASRSEAFRPQVVNGL. Over residues 254-268 the composition is skewed to low complexity; sequence ESPPAAIGSSSASRS.

It belongs to the cucumovirus movement protein family.

The protein resides in the host cell junction. It is found in the host plasmodesma. Functionally, transports viral genome to neighboring plant cells directly through plasmosdesmata, without any budding. The movement protein allows efficient cell to cell propagation, by bypassing the host cell wall barrier. Acts by forming a tubular structure at the host plasmodesmata, enlarging it enough to allow free passage of virion capsids. This is Movement protein from Cucumis sativus (Cucumber).